A 238-amino-acid polypeptide reads, in one-letter code: tRNA (guanine-N(7)-)-methyltransferase (238 aa).

Residues glutamate 70, aspartate 95, aspartate 122, and aspartate 145 each coordinate S-adenosyl-L-methionine. The active site involves aspartate 145. Substrate-binding positions include lysine 149, aspartate 181, and 216–219; that span reads TKFE.

It belongs to the class I-like SAM-binding methyltransferase superfamily. TrmB family.

The catalysed reaction is guanosine(46) in tRNA + S-adenosyl-L-methionine = N(7)-methylguanosine(46) in tRNA + S-adenosyl-L-homocysteine. It functions in the pathway tRNA modification; N(7)-methylguanine-tRNA biosynthesis. Catalyzes the formation of N(7)-methylguanine at position 46 (m7G46) in tRNA. The sequence is that of tRNA (guanine-N(7)-)-methyltransferase from Neisseria meningitidis serogroup C / serotype 2a (strain ATCC 700532 / DSM 15464 / FAM18).